The chain runs to 207 residues: Protein GrpE (207 aa).

Basic and acidic residues predominate over residues 1–11; it reads MTETDGQKDNN. The disordered stretch occupies residues 1–40; the sequence is MTETDGQKDNNQDTAQAAADPVVSKPYIMPDDPEEGSNEA.

It belongs to the GrpE family. Homodimer.

The protein resides in the cytoplasm. In terms of biological role, participates actively in the response to hyperosmotic and heat shock by preventing the aggregation of stress-denatured proteins, in association with DnaK and GrpE. It is the nucleotide exchange factor for DnaK and may function as a thermosensor. Unfolded proteins bind initially to DnaJ; upon interaction with the DnaJ-bound protein, DnaK hydrolyzes its bound ATP, resulting in the formation of a stable complex. GrpE releases ADP from DnaK; ATP binding to DnaK triggers the release of the substrate protein, thus completing the reaction cycle. Several rounds of ATP-dependent interactions between DnaJ, DnaK and GrpE are required for fully efficient folding. The sequence is that of Protein GrpE from Rhodopseudomonas palustris (strain ATCC BAA-98 / CGA009).